Here is a 422-residue protein sequence, read N- to C-terminus: Serine/threonine-protein kinase H1 homolog (422 aa).

A disordered region spans residues F35 to K80. Residues G46 to Q62 show a composition bias toward polar residues. The Protein kinase domain occupies Y96–I353. ATP-binding positions include I102–V110 and K125. The Proton acceptor role is filled by D216. A disordered region spans residues R376–G422. Positions T384–T396 are enriched in low complexity. The segment covering R405–R414 has biased composition (basic and acidic residues).

Belongs to the protein kinase superfamily. CAMK Ser/Thr protein kinase family.

It carries out the reaction L-seryl-[protein] + ATP = O-phospho-L-seryl-[protein] + ADP + H(+). It catalyses the reaction L-threonyl-[protein] + ATP = O-phospho-L-threonyl-[protein] + ADP + H(+). This chain is Serine/threonine-protein kinase H1 homolog (pskh1), found in Danio rerio (Zebrafish).